The primary structure comprises 121 residues: Large ribosomal subunit protein bL20 (121 aa).

It belongs to the bacterial ribosomal protein bL20 family.

In terms of biological role, binds directly to 23S ribosomal RNA and is necessary for the in vitro assembly process of the 50S ribosomal subunit. It is not involved in the protein synthesizing functions of that subunit. This is Large ribosomal subunit protein bL20 from Roseobacter denitrificans (strain ATCC 33942 / OCh 114) (Erythrobacter sp. (strain OCh 114)).